A 396-amino-acid chain; its full sequence is MAKEKFERNKPHCNIGTIGHVDHGKTTLTAAITIILAKSGGATAKNYADIDAAPEEKARGITINTAHVEYETANRHYAHVDCPGHADYVKNMITGAAQMDGAILVVSAADGPMPQTREHILLARQVGVPALVVYMNKVDLVDDEELLELVEMEVRELLSSYDFPGDDIPITKGSAKVAIDGGDPVIGEQSILALMTTVDAYIPQPDRPIDLPFLMPVEDVFSISGRGTVVTGRIEKGVVKVGEEVEIVGIRAVQKTTCTGVEMFRKLLDQGQAGDNVGVLLRGTKREDVERGQVLCKPGSITPHTKFVAEAYILTKEEGGRHTPFFTNYRPQFYFRTTDVTGIIKLREGVEMIMPGDNAELDVELITPIAMDQGLRFAIREGGRTVGAGVVAKIVE.

One can recognise a tr-type G domain in the interval Lys-10–Asp-206. The interval Gly-19 to Thr-26 is G1. A GTP-binding site is contributed by Gly-19–Thr-26. Thr-26 contacts Mg(2+). The interval Gly-60–Asn-64 is G2. The G3 stretch occupies residues Asp-81 to Gly-84. GTP is bound by residues Asp-81 to His-85 and Asn-136 to Asp-139. Residues Asn-136–Asp-139 are G4. The tract at residues Ser-174–Lys-176 is G5.

This sequence belongs to the TRAFAC class translation factor GTPase superfamily. Classic translation factor GTPase family. EF-Tu/EF-1A subfamily. As to quaternary structure, monomer.

The protein resides in the cytoplasm. The enzyme catalyses GTP + H2O = GDP + phosphate + H(+). Its function is as follows. GTP hydrolase that promotes the GTP-dependent binding of aminoacyl-tRNA to the A-site of ribosomes during protein biosynthesis. This Caulobacter sp. (strain K31) protein is Elongation factor Tu 2.